We begin with the raw amino-acid sequence, 156 residues long: Ribonuclease P protein component (156 aa).

The interval 126–156 (GLRKLGVTPGGGRSPAPRAHSGARPRTDARS) is disordered.

It belongs to the RnpA family. Consists of a catalytic RNA component (M1 or rnpB) and a protein subunit.

It catalyses the reaction Endonucleolytic cleavage of RNA, removing 5'-extranucleotides from tRNA precursor.. Its function is as follows. RNaseP catalyzes the removal of the 5'-leader sequence from pre-tRNA to produce the mature 5'-terminus. It can also cleave other RNA substrates such as 4.5S RNA. The protein component plays an auxiliary but essential role in vivo by binding to the 5'-leader sequence and broadening the substrate specificity of the ribozyme. The sequence is that of Ribonuclease P protein component from Nocardia farcinica (strain IFM 10152).